The following is a 281-amino-acid chain: 2-dehydro-3-deoxyphosphooctonate aldolase (281 aa).

Belongs to the KdsA family.

The protein resides in the cytoplasm. The catalysed reaction is D-arabinose 5-phosphate + phosphoenolpyruvate + H2O = 3-deoxy-alpha-D-manno-2-octulosonate-8-phosphate + phosphate. It participates in carbohydrate biosynthesis; 3-deoxy-D-manno-octulosonate biosynthesis; 3-deoxy-D-manno-octulosonate from D-ribulose 5-phosphate: step 2/3. The protein operates within bacterial outer membrane biogenesis; lipopolysaccharide biosynthesis. This chain is 2-dehydro-3-deoxyphosphooctonate aldolase, found in Acidithiobacillus ferrooxidans (strain ATCC 23270 / DSM 14882 / CIP 104768 / NCIMB 8455) (Ferrobacillus ferrooxidans (strain ATCC 23270)).